The sequence spans 245 residues: Dehydrogenase/reductase SDR family member 6 (245 aa).

Residues Gln16–Ile18, Asp37, and Asp58 contribute to the NAD(+) site. Position 144 (Arg144) interacts with substrate. Tyr147 functions as the Proton acceptor in the catalytic mechanism. NAD(+)-binding positions include Lys151 and Val180 to Ser184. Substrate is bound by residues Arg188 and Arg205.

The protein belongs to the short-chain dehydrogenases/reductases (SDR) family. As to quaternary structure, homotetramer.

Its subcellular location is the cytoplasm. It catalyses the reaction cis-4-hydroxy-L-proline + NAD(+) = 4-oxo-L-proline + NADH + H(+). The catalysed reaction is (R)-3-hydroxybutanoate + NAD(+) = acetoacetate + NADH + H(+). The protein operates within amino-acid metabolism. It functions in the pathway siderophore biosynthesis. Its function is as follows. NAD(H)-dependent dehydrogenase/reductase with a preference for cyclic substrates. Catalyzes stereoselective conversion of 4-oxo-L-proline to cis-4-hydroxy-L-proline, likely a detoxification mechanism for ketoprolines. Mediates the formation of 2,5-dihydroxybenzoate (2,5-DHBA), a siderophore that chelates free cytoplasmic iron and associates with LCN2, thereby regulating iron transport and homeostasis while protecting cells against free radical-induced oxidative stress. The iron-siderophore complex is imported into mitochondria, providing an iron source for mitochondrial metabolic processes in particular heme synthesis. May act as a 3-hydroxybutyrate dehydrogenase. This is Dehydrogenase/reductase SDR family member 6 (BDH2) from Bos taurus (Bovine).